We begin with the raw amino-acid sequence, 286 residues long: 33 kDa chaperonin (286 aa).

2 disulfides stabilise this stretch: C233–C235 and C267–C270.

It belongs to the HSP33 family. Post-translationally, under oxidizing conditions two disulfide bonds are formed involving the reactive cysteines. Under reducing conditions zinc is bound to the reactive cysteines and the protein is inactive.

Its subcellular location is the cytoplasm. Its function is as follows. Redox regulated molecular chaperone. Protects both thermally unfolding and oxidatively damaged proteins from irreversible aggregation. Plays an important role in the bacterial defense system toward oxidative stress. The protein is 33 kDa chaperonin of Histophilus somni (strain 2336) (Haemophilus somnus).